The following is a 316-amino-acid chain: 4-hydroxy-3-methylbut-2-enyl diphosphate reductase (316 aa).

Residue cysteine 12 participates in [4Fe-4S] cluster binding. (2E)-4-hydroxy-3-methylbut-2-enyl diphosphate-binding residues include histidine 41 and histidine 74. Residues histidine 41 and histidine 74 each coordinate dimethylallyl diphosphate. Isopentenyl diphosphate contacts are provided by histidine 41 and histidine 74. Cysteine 96 contributes to the [4Fe-4S] cluster binding site. Histidine 124 contributes to the (2E)-4-hydroxy-3-methylbut-2-enyl diphosphate binding site. A dimethylallyl diphosphate-binding site is contributed by histidine 124. Histidine 124 is an isopentenyl diphosphate binding site. Glutamate 126 functions as the Proton donor in the catalytic mechanism. Threonine 168 contacts (2E)-4-hydroxy-3-methylbut-2-enyl diphosphate. Cysteine 198 contacts [4Fe-4S] cluster. (2E)-4-hydroxy-3-methylbut-2-enyl diphosphate-binding residues include serine 226, serine 227, asparagine 228, and serine 270. The dimethylallyl diphosphate site is built by serine 226, serine 227, asparagine 228, and serine 270. Isopentenyl diphosphate-binding residues include serine 226, serine 227, asparagine 228, and serine 270.

Belongs to the IspH family. [4Fe-4S] cluster serves as cofactor.

It catalyses the reaction isopentenyl diphosphate + 2 oxidized [2Fe-2S]-[ferredoxin] + H2O = (2E)-4-hydroxy-3-methylbut-2-enyl diphosphate + 2 reduced [2Fe-2S]-[ferredoxin] + 2 H(+). It carries out the reaction dimethylallyl diphosphate + 2 oxidized [2Fe-2S]-[ferredoxin] + H2O = (2E)-4-hydroxy-3-methylbut-2-enyl diphosphate + 2 reduced [2Fe-2S]-[ferredoxin] + 2 H(+). The protein operates within isoprenoid biosynthesis; dimethylallyl diphosphate biosynthesis; dimethylallyl diphosphate from (2E)-4-hydroxy-3-methylbutenyl diphosphate: step 1/1. It participates in isoprenoid biosynthesis; isopentenyl diphosphate biosynthesis via DXP pathway; isopentenyl diphosphate from 1-deoxy-D-xylulose 5-phosphate: step 6/6. Its function is as follows. Catalyzes the conversion of 1-hydroxy-2-methyl-2-(E)-butenyl 4-diphosphate (HMBPP) into a mixture of isopentenyl diphosphate (IPP) and dimethylallyl diphosphate (DMAPP). Acts in the terminal step of the DOXP/MEP pathway for isoprenoid precursor biosynthesis. This is 4-hydroxy-3-methylbut-2-enyl diphosphate reductase from Acinetobacter baumannii (strain AB307-0294).